Consider the following 192-residue polypeptide: Ras-like GTP-binding protein O-RHO (192 aa).

12–19 (GDGACGKT) is a binding site for GTP. The Effector region motif lies at 34–42 (YVPTVFENY). Residues 59-63 (DTAGQ) and 117-120 (NKKT) contribute to the GTP site. Cysteine 189 is subject to Cysteine methyl ester. Residue cysteine 189 is the site of S-geranylgeranyl cysteine attachment. A propeptide spans 190-192 (LLL) (removed in mature form).

The protein belongs to the small GTPase superfamily. Rho family.

Its subcellular location is the cell membrane. The sequence is that of Ras-like GTP-binding protein O-RHO from Diplobatis ommata (Ocellated electric ray).